Reading from the N-terminus, the 929-residue chain is Synaptopodin (929 aa).

Met-1 carries the post-translational modification N-acetylmethionine. Pro residues predominate over residues 1-12 (MLGPHLPPPPLA). A disordered region spans residues 1-260 (MLGPHLPPPP…EASLLRHLEK (260 aa)). Basic and acidic residues-rich tracts occupy residues 60–69 (GVSRSGDDSA) and 91–110 (SREEQGASQHDDRASQDWDV). The residue at position 140 (Ser-140) is a Phosphoserine. Residues 142–151 (TEKDLKEAKA) are compositionally biased toward basic and acidic residues. Residues 152–170 (RSQQIAAQLTTPPSSNSRG) are compositionally biased toward polar residues. Ser-207 carries the phosphoserine modification. Residues 224 to 234 (EPGPPRHPSPQ) show a composition bias toward pro residues. Ser-263 is modified (phosphoserine). Residues 285–389 (GLHLSQNREA…TLCADGQPQA (105 aa)) are disordered. The segment covering 317–332 (LASPSATLTTPTSNSS) has biased composition (low complexity). N-linked (GlcNAc...) asparagine glycosylation occurs at Asn-330. The span at 333 to 379 (HNPPATDVNQNPPATVVPQSLPLSSIQQNSSEAQLPSNGTGPASKPS) shows a compositional bias: polar residues. Ser-501 and Ser-525 each carry phosphoserine. The tract at residues 509 to 558 (FGEKAPAPQPPSLPDRSPRPQRHIMSRSPMVERRMMGQRSPASERRPLGN) is disordered. At Thr-560 the chain carries Phosphothreonine. The PPxY motif motif lies at 562–565 (PPTY). Ser-580 is modified (phosphoserine). Positions 581–584 (PPSY) match the PPxY motif motif. Disordered regions lie at residues 589–610 (PSSDPKSSHLKGQAVPASKTGI) and 630–726 (KPKV…KGAE). Over residues 646–656 (ADEKRRQRDQG) the composition is skewed to basic and acidic residues. Phosphoserine is present on residues Ser-685, Ser-702, and Tyr-738. A compositionally biased stretch (low complexity) spans 685–698 (SPAAAEEVVPEWAS). Positions 740–763 (IESSSHTPELARCPSPTMSLPSSW) are disordered. Thr-746 carries the post-translational modification Phosphothreonine. Phosphoserine occurs at positions 754, 758, and 779. The residue at position 783 (Thr-783) is a Phosphothreonine. 8 positions are modified to phosphoserine: Pro-784, Thr-804, Arg-812, Lys-826, Ser-833, Ser-854, Pro-871, and Pro-894. The span at 826–839 (KVSPRAASPAKPSS) shows a compositional bias: low complexity. Residues 826 to 916 (KVSPRAASPA…RPSFSTRNAG (91 aa)) are disordered. Residues 866–880 (GLYTSPGQDSLQPTA) show a composition bias toward polar residues.

It belongs to the synaptopodin family. Interacts with BAIAP1. Interacts with actin. Interacts (via PPxY motifs) with WWC1 (via WW domains). O-glycosylated. As to expression, expressed in cerebral cortex.

It is found in the cytoplasm. Its subcellular location is the cytoskeleton. The protein localises to the cell junction. It localises to the tight junction. The protein resides in the perikaryon. It is found in the cell projection. Its subcellular location is the dendritic spine. The protein localises to the postsynaptic density. It localises to the synapse. The protein resides in the cytosol. Its function is as follows. Actin-associated protein that may play a role in modulating actin-based shape and motility of dendritic spines and renal podocyte foot processes. Seems to be essential for the formation of spine apparatuses in spines of telencephalic neurons, which is involved in synaptic plasticity. In Homo sapiens (Human), this protein is Synaptopodin (SYNPO).